The sequence spans 1332 residues: DEMETER-like protein 2 (1332 aa).

Basic and acidic residues predominate over residues 1–23 (MEVEGEVREKEARVKGRQPETEV). Disordered stretches follow at residues 1 to 29 (MEVE…GLPQ), 137 to 242 (VSTS…TSEE), and 280 to 317 (VEGS…KKTD). Positions 137-153 (VSTSTQRTEPESPQITL) are enriched in polar residues. The span at 223–236 (SKAGIKKSSIAATA) shows a compositional bias: low complexity. Basic residues predominate over residues 301–312 (PKGRRGQRRSNG). The segment at 497–595 (KVQLDPETSR…AYMDLAAEFP (99 aa)) is DEMETER. The span at 739–753 (HQQDPESTIQTQDQQ) shows a compositional bias: polar residues. Positions 739-810 (HQQDPESTIQ…GGRKRERTER (72 aa)) are disordered. The span at 763–777 (KNRKKPTTSKPKKKS) shows a compositional bias: basic residues. Residues 787–810 (KSVDWDSLRKEAESGGRKRERTER) show a composition bias toward basic and acidic residues. Positions 970, 977, 980, and 986 each coordinate [4Fe-4S] cluster.

Belongs to the DNA glycosylase family. DEMETER subfamily. [4Fe-4S] cluster serves as cofactor.

The protein localises to the nucleus. Its function is as follows. Potential transcriptional activator that may act by nicking the target promoter. Catalyzes the release of 5-methylcytosine (5-meC) from DNA by a glycosylase/lyase mechanism. In Arabidopsis thaliana (Mouse-ear cress), this protein is DEMETER-like protein 2 (DML2).